The following is a 287-amino-acid chain: Acetylglutamate kinase (287 aa).

Substrate-binding positions include 64-65 (GG), Arg86, and Asn181.

Belongs to the acetylglutamate kinase family. ArgB subfamily.

It localises to the cytoplasm. It catalyses the reaction N-acetyl-L-glutamate + ATP = N-acetyl-L-glutamyl 5-phosphate + ADP. It functions in the pathway amino-acid biosynthesis; L-arginine biosynthesis; N(2)-acetyl-L-ornithine from L-glutamate: step 2/4. Functionally, catalyzes the ATP-dependent phosphorylation of N-acetyl-L-glutamate. This is Acetylglutamate kinase from Desulforamulus reducens (strain ATCC BAA-1160 / DSM 100696 / MI-1) (Desulfotomaculum reducens).